We begin with the raw amino-acid sequence, 511 residues long: IWS1-like protein (511 aa).

The tract at residues 1–200 (MSDHEEESHG…DDGPVDRHGR (200 aa)) is disordered. Low complexity-rich tracts occupy residues 11–30 (ASPT…PISP) and 55–86 (APAS…SPVK). Acidic residues predominate over residues 94–103 (DSDEDSDAEE). Over residues 134–143 (HEGTSKKEPT) the composition is skewed to basic and acidic residues. The segment covering 166–179 (LDEFVEGRDEEESQ) has biased composition (acidic residues). The region spanning 294–374 (SALSEWLAPL…GEWARPIYHL (81 aa)) is the TFIIS N-terminal domain. The interval 382–454 (SRQEREERDY…RARVPKPSTK (73 aa)) is disordered. Composition is skewed to basic and acidic residues over residues 383-395 (RQER…SRMP) and 414-425 (DQPKRPRIRDAD).

This sequence belongs to the IWS1 family.

It is found in the nucleus. The sequence is that of IWS1-like protein from Caenorhabditis elegans.